Reading from the N-terminus, the 320-residue chain is Putative cyclin-D7-1 (320 aa).

Residues Met-1–Asp-46 form a disordered region. The segment covering Ser-24–Glu-34 has biased composition (pro residues). Positions Gln-35–Pro-44 are enriched in low complexity.

This sequence belongs to the cyclin family. Cyclin D subfamily.

The sequence is that of Putative cyclin-D7-1 (CYCD7-1) from Oryza sativa subsp. japonica (Rice).